Consider the following 104-residue polypeptide: ATP synthase subunit c (104 aa).

The next 2 membrane-spanning stretches (helical) occupy residues 31–51 (SMIA…IGMG) and 75–95 (MFIA…IALI).

It belongs to the ATPase C chain family. In terms of assembly, F-type ATPases have 2 components, F(1) - the catalytic core - and F(0) - the membrane proton channel. F(1) has five subunits: alpha(3), beta(3), gamma(1), delta(1), epsilon(1). F(0) has three main subunits: a(1), b(2) and c(10-14). The alpha and beta chains form an alternating ring which encloses part of the gamma chain. F(1) is attached to F(0) by a central stalk formed by the gamma and epsilon chains, while a peripheral stalk is formed by the delta and b chains.

It is found in the cell inner membrane. In terms of biological role, f(1)F(0) ATP synthase produces ATP from ADP in the presence of a proton or sodium gradient. F-type ATPases consist of two structural domains, F(1) containing the extramembraneous catalytic core and F(0) containing the membrane proton channel, linked together by a central stalk and a peripheral stalk. During catalysis, ATP synthesis in the catalytic domain of F(1) is coupled via a rotary mechanism of the central stalk subunits to proton translocation. Key component of the F(0) channel; it plays a direct role in translocation across the membrane. A homomeric c-ring of between 10-14 subunits forms the central stalk rotor element with the F(1) delta and epsilon subunits. This is ATP synthase subunit c from Sulfurimonas denitrificans (strain ATCC 33889 / DSM 1251) (Thiomicrospira denitrificans (strain ATCC 33889 / DSM 1251)).